Reading from the N-terminus, the 1033-residue chain is SIT4-associating protein SAP190 (1033 aa).

Disordered regions lie at residues 32 to 82 (DQDD…TTES), 147 to 213 (PEII…QVET), 768 to 813 (FGND…HDSG), and 828 to 1033 (ENEE…KEAF). Residues 158–170 (ILIERDRKDKKED) show a composition bias toward basic and acidic residues. The span at 171–182 (AEEGGDSEETTN) shows a compositional bias: acidic residues. Residues 183–195 (DSDHDSGDERSVD) show a composition bias toward basic and acidic residues. Serine 774 is subject to Phosphoserine. Acidic residues-rich tracts occupy residues 784 to 793 (SEDIIGDTEG) and 828 to 838 (ENEEDYAEYSD). Phosphoserine occurs at positions 857, 862, and 892. Residues 858 to 879 (DDGKSKSAESEFTDKISEHRDG) are compositionally biased toward basic and acidic residues. A compositionally biased stretch (polar residues) spans 909-924 (SRSQPSDPKLQDQNIF). Over residues 932–944 (GVGDDDDYMDPND) the composition is skewed to acidic residues. Threonine 990 is modified (phosphothreonine). Serine 991 carries the phosphoserine modification. The segment covering 1000-1018 (ISSDEEDSEDEDEENDMGN) has biased composition (acidic residues).

This sequence belongs to the SAPS family. Associates with the SIT4 protein phosphatase catalytic subunit in a cell-cycle-dependent manner. Post-translationally, hyperphosphorylated in the absence of SIT4.

The protein localises to the cytoplasm. Its function is as follows. Positive regulator of protein phosphatase SIT4. Involved in the general amino acid control (GAAC) response regulated by TOR. Involved in the dephosphorylation of the elongator complex subunit IKI3. In Saccharomyces cerevisiae (strain AWRI1631) (Baker's yeast), this protein is SIT4-associating protein SAP190 (SAP190).